Consider the following 364-residue polypeptide: Leucine-rich repeat-containing protein 19 (364 aa).

Residues 1–20 form the signal peptide; that stretch reads MKVTRFMFWLFSMLLPSVKS. Residues 21-264 lie on the Extracellular side of the membrane; the sequence is QASETEVPCN…SEHEPLGKSW (244 aa). N-linked (GlcNAc...) asparagine glycosylation is found at N30, N35, N46, and N88. LRR repeat units follow at residues 44–69, 70–93, 94–117, 118–141, 143–163, and 164–190; these read STNV…VLQM, YSLL…SFRN, LLNL…SFVG, LNEL…TFVP, NNLK…APQL, and PHLE…NWLN. An LRRCT domain is found at 174–225; that stretch reads NPWNCTCGLLELHNWLNTSNVTLENENMTMCSYPDELKHDSIKSAPFTTECH. N177, N190, N193, N200, N241, N245, and N250 each carry an N-linked (GlcNAc...) asparagine glycan. The helical transmembrane segment at 265-285 threads the bilayer; sequence AFLVGVVATVLLTSLLIFIAI. Residues 286 to 364 lie on the Cytoplasmic side of the membrane; that stretch reads KCPVWYNILL…IDINEVHEEK (79 aa).

As to quaternary structure, interacts with TRAF2 and TRAF6. Strongly expressed in kidney, also expressed in spleen, intestine and colon. Highly expressed in epithelial cells. In kidney, mainly expressed in renal collecting duct epithelial cells.

It localises to the membrane. With respect to regulation, activated by TLR ligands such as LPS, bacterial DNA and peptidoglycan. Functionally, pathogen-recognition receptor which mediates the activation of TRAF2- and TRAF6 NF-kappa-B signaling pathways and induces the expression of pro-inflammatory cytokines. In kidney, prevents infection by uropathogenic bacteria by inducing the production of cytokines, chemokines and antimicrobial substances. In gut, involved in host-microbiota interactions, plays a critical role in promoting the recruitment of immune cells and intestinal inflammation. The protein is Leucine-rich repeat-containing protein 19 of Mus musculus (Mouse).